We begin with the raw amino-acid sequence, 187 residues long: Protein TIFY 3B (187 aa).

Over residues 1–10 (MTKVKDEPRA) the composition is skewed to basic and acidic residues. The segment at 1-50 (MTKVKDEPRASVEGGCGVADGDGGAAEIGGTGSVEKSINEVRSTEIQTAE) is disordered. Positions 14-32 (GGCGVADGDGGAAEIGGTG) are enriched in gly residues. One can recognise a Tify domain in the interval 51–86 (PTVPPNQLTIFFGGSVTVFDGLPSEKVQEILRIAAK). The short motif at 139–163 (PIARRHSLQRFLEKRRDRLVNKNPY) is the Jas element. Residues 141-148 (ARRHSLQR) carry the Nuclear localization signal motif. Positions 152–187 (KRRDRLVNKNPYPTSDFKKTDVPTGNVSIKEEFPTA) are disordered.

It belongs to the TIFY/JAZ family. In terms of assembly, interacts with MYC2, AFPH2/NINJA, TIFY10A/JAZ1, TIFY10B/JAZ2, TIFY11A/JAZ5, TIFY11B/JAZ6, TIFY5A/JAZ8 and TIFY9/JAZ10. (Microbial infection) Interacts with the pathogenic Pseudomonas syringae HopZ1a protein. (Microbial infection) Acetylated by Pseudomonas syringae HopZ1a. Post-translationally, ubiquitinated. Targeted for degradation by the SCF(COI1) E3 ubiquitin ligase-proteasome pathway during jasmonate signaling.

It is found in the nucleus. Functionally, repressor of jasmonate responses. This is Protein TIFY 3B from Arabidopsis thaliana (Mouse-ear cress).